The sequence spans 252 residues: Imidazole glycerol phosphate synthase subunit HisF (252 aa).

Residues D11 and D130 contribute to the active site.

The protein belongs to the HisA/HisF family. As to quaternary structure, heterodimer of HisH and HisF.

Its subcellular location is the cytoplasm. It carries out the reaction 5-[(5-phospho-1-deoxy-D-ribulos-1-ylimino)methylamino]-1-(5-phospho-beta-D-ribosyl)imidazole-4-carboxamide + L-glutamine = D-erythro-1-(imidazol-4-yl)glycerol 3-phosphate + 5-amino-1-(5-phospho-beta-D-ribosyl)imidazole-4-carboxamide + L-glutamate + H(+). Its pathway is amino-acid biosynthesis; L-histidine biosynthesis; L-histidine from 5-phospho-alpha-D-ribose 1-diphosphate: step 5/9. Its function is as follows. IGPS catalyzes the conversion of PRFAR and glutamine to IGP, AICAR and glutamate. The HisF subunit catalyzes the cyclization activity that produces IGP and AICAR from PRFAR using the ammonia provided by the HisH subunit. The sequence is that of Imidazole glycerol phosphate synthase subunit HisF from Bacillus cereus (strain ZK / E33L).